The following is a 297-amino-acid chain: Cell division protein FtsX (297 aa).

The Cytoplasmic portion of the chain corresponds to 1 to 24; sequence MKAKTLSRHLREGVKNLSRNGWMT. A helical membrane pass occupies residues 25-45; it reads FASVSAVTVTLLLVGVFLTAI. The Extracellular segment spans residues 46-171; that stretch reads MNMNHFATKV…LFDTVKTGRN (126 aa). A helical membrane pass occupies residues 172 to 192; sequence IGIVLIAGLLFTAMFLISNTI. The Cytoplasmic portion of the chain corresponds to 193 to 219; the sequence is KITIYARSTEIEIMKLVGATNWFIRWP. The helical transmembrane segment at 220–240 threads the bilayer; that stretch reads FLLEGLFLGVLGSIIPIGLIL. Topologically, residues 241–270 are extracellular; that stretch reads VTYNSLQGMFNEKLGGTIFELLPYSPFVFQ. Residues 271-291 traverse the membrane as a helical segment; sequence LAGLLVLIGALIGMWGSVMSI. Over 292 to 297 the chain is Cytoplasmic; it reads RRFLKV.

This sequence belongs to the ABC-4 integral membrane protein family. FtsX subfamily. Interacts with FtsE.

The protein resides in the cell membrane. Functionally, part of the ABC transporter FtsEX involved in asymmetric cellular division facilitating the initiation of sporulation. This is Cell division protein FtsX from Bacillus anthracis.